We begin with the raw amino-acid sequence, 166 residues long: MAQRLLLGRFLTSVISRKPPQGVWASLTSKTLQTPQYNAGGLTVMPSPARTVHTTRVCLTTFNVQDGPDFQDRVVNSETPVVVDFHAQWCGPCKILGPRLEKMVAKQHGKVVMAKVDIDDHTDLAIEYEVSAVPTVLAIKNGDVVDKFVGIKDEDQLEAFLKKLIG.

The N-terminal 59 residues, 1–59 (MAQRLLLGRFLTSVISRKPPQGVWASLTSKTLQTPQYNAGGLTVMPSPARTVHTTRVCL), are a transit peptide targeting the mitochondrion. A Thioredoxin domain is found at 61–166 (TFNVQDGPDF…LEAFLKKLIG (106 aa)). Catalysis depends on nucleophile residues cysteine 90 and cysteine 93. Cysteines 90 and 93 form a disulfide. Lysine 152 carries the post-translational modification N6-acetyllysine; alternate. Lysine 152 is modified (N6-succinyllysine; alternate).

This sequence belongs to the thioredoxin family. As to quaternary structure, monomer.

The protein resides in the mitochondrion. Its function is as follows. Important for the control of mitochondrial reactive oxygen species homeostasis, apoptosis regulation and cell viability. Is involved in various redox reactions including the reduction of protein disulfide bonds, through the reversible oxidation of its active center dithiol to a disulfide. In Mus musculus (Mouse), this protein is Thioredoxin, mitochondrial (Txn2).